The following is a 342-amino-acid chain: tRNA N6-adenosine threonylcarbamoyltransferase (342 aa).

2 residues coordinate Fe cation: histidine 111 and histidine 115. Residues 134–138 (LVSGG), aspartate 167, glycine 180, and asparagine 275 each bind substrate. Aspartate 303 lines the Fe cation pocket.

This sequence belongs to the KAE1 / TsaD family. Requires Fe(2+) as cofactor.

Its subcellular location is the cytoplasm. The catalysed reaction is L-threonylcarbamoyladenylate + adenosine(37) in tRNA = N(6)-L-threonylcarbamoyladenosine(37) in tRNA + AMP + H(+). Required for the formation of a threonylcarbamoyl group on adenosine at position 37 (t(6)A37) in tRNAs that read codons beginning with adenine. Is involved in the transfer of the threonylcarbamoyl moiety of threonylcarbamoyl-AMP (TC-AMP) to the N6 group of A37, together with TsaE and TsaB. TsaD likely plays a direct catalytic role in this reaction. The chain is tRNA N6-adenosine threonylcarbamoyltransferase from Paraburkholderia xenovorans (strain LB400).